A 431-amino-acid polypeptide reads, in one-letter code: Xaa-Arg dipeptidase (431 aa).

The protein belongs to the peptidase M20A family.

It catalyses the reaction beta-alanyl-L-lysine + H2O = beta-alanine + L-lysine. It carries out the reaction beta-alanyl-L-arginine + H2O = beta-alanine + L-arginine. The catalysed reaction is beta-alanyl-L-ornithine + H2O = beta-alanine + L-ornithine. The enzyme catalyses N(2)-(4-aminobutanoyl)-L-lysine + H2O = 4-aminobutanoate + L-lysine. It catalyses the reaction N(2)-(4-aminobutanoyl)-L-arginine + H2O = 4-aminobutanoate + L-arginine. It carries out the reaction N(2)-(4-aminobutanoyl)-L-ornithine + H2O = 4-aminobutanoate + L-ornithine. Its function is as follows. Catalyzes the peptide bond hydrolysis in dipeptides having basic amino acids lysine, ornithine or arginine at C-terminus. Postulated to function in a metabolite repair mechanism by eliminating alternate dipeptide by-products formed during carnosine synthesis. The protein is Xaa-Arg dipeptidase of Mus musculus (Mouse).